The sequence spans 139 residues: Small ribosomal subunit protein uS12 (139 aa).

Residues 1–44 (MPTINQLVKKPRTSKVKKSTAPALNKGYNSHKKKATDLASPQKR) are disordered. Residues 9–18 (KKPRTSKVKK) show a composition bias toward basic residues. Asp102 is modified (3-methylthioaspartic acid).

The protein belongs to the universal ribosomal protein uS12 family. Part of the 30S ribosomal subunit. Contacts proteins S8 and S17. May interact with IF1 in the 30S initiation complex.

In terms of biological role, with S4 and S5 plays an important role in translational accuracy. Its function is as follows. Interacts with and stabilizes bases of the 16S rRNA that are involved in tRNA selection in the A site and with the mRNA backbone. Located at the interface of the 30S and 50S subunits, it traverses the body of the 30S subunit contacting proteins on the other side and probably holding the rRNA structure together. The combined cluster of proteins S8, S12 and S17 appears to hold together the shoulder and platform of the 30S subunit. This Macrococcus caseolyticus (strain JCSC5402) (Macrococcoides caseolyticum) protein is Small ribosomal subunit protein uS12.